The sequence spans 664 residues: DNA-directed DNA polymerase (664 aa).

The interval 352-378 is disordered; the sequence is RRQKDDESDGTAGAAYGRLSSEHPNLQ.

The protein belongs to the DNA polymerase type-A family. DpoZ subfamily.

The catalysed reaction is DNA(n) + a 2'-deoxyribonucleoside 5'-triphosphate = DNA(n+1) + diphosphate. Its function is as follows. DNA polymerase that replicates the viral genomic DNA. Also incorporates 5-hydroxymethyl-2'-deoxyuridine (5-hmdU) instead of dTMP into DNA during replication, as an early step in the pathway of thymidine hypermodifications of the viral genome. As a final result of the pathway of hypermodification, 5-aminoethyl-2'-deoxyuridine (5-NedU) substitutes for about 30% of thymidines in the viral DNA. These modifications probably prevent degradation of viral genome by the host restriction-modification antiviral defense system. This Pseudomonas phage M6 protein is DNA-directed DNA polymerase (gp62).